The sequence spans 427 residues: Serine hydroxymethyltransferase (427 aa).

(6S)-5,6,7,8-tetrahydrofolate is bound by residues leucine 122 and 126-128 (GHL). At lysine 231 the chain carries N6-(pyridoxal phosphate)lysine.

Belongs to the SHMT family. Homodimer. Pyridoxal 5'-phosphate serves as cofactor.

It is found in the cytoplasm. It carries out the reaction (6R)-5,10-methylene-5,6,7,8-tetrahydrofolate + glycine + H2O = (6S)-5,6,7,8-tetrahydrofolate + L-serine. Its pathway is one-carbon metabolism; tetrahydrofolate interconversion. It participates in amino-acid biosynthesis; glycine biosynthesis; glycine from L-serine: step 1/1. Catalyzes the reversible interconversion of serine and glycine with tetrahydrofolate (THF) serving as the one-carbon carrier. This reaction serves as the major source of one-carbon groups required for the biosynthesis of purines, thymidylate, methionine, and other important biomolecules. Also exhibits THF-independent aldolase activity toward beta-hydroxyamino acids, producing glycine and aldehydes, via a retro-aldol mechanism. In Acidobacterium capsulatum (strain ATCC 51196 / DSM 11244 / BCRC 80197 / JCM 7670 / NBRC 15755 / NCIMB 13165 / 161), this protein is Serine hydroxymethyltransferase.